Reading from the N-terminus, the 292-residue chain is ATP phosphoribosyltransferase (292 aa).

Belongs to the ATP phosphoribosyltransferase family. Long subfamily. It depends on Mg(2+) as a cofactor.

The protein localises to the cytoplasm. It carries out the reaction 1-(5-phospho-beta-D-ribosyl)-ATP + diphosphate = 5-phospho-alpha-D-ribose 1-diphosphate + ATP. Its pathway is amino-acid biosynthesis; L-histidine biosynthesis; L-histidine from 5-phospho-alpha-D-ribose 1-diphosphate: step 1/9. Feedback inhibited by histidine. Catalyzes the condensation of ATP and 5-phosphoribose 1-diphosphate to form N'-(5'-phosphoribosyl)-ATP (PR-ATP). Has a crucial role in the pathway because the rate of histidine biosynthesis seems to be controlled primarily by regulation of HisG enzymatic activity. The chain is ATP phosphoribosyltransferase from Thermodesulfovibrio yellowstonii (strain ATCC 51303 / DSM 11347 / YP87).